A 209-amino-acid polypeptide reads, in one-letter code: Protein GrpE (209 aa).

It belongs to the GrpE family. As to quaternary structure, homodimer.

Its subcellular location is the cytoplasm. Functionally, participates actively in the response to hyperosmotic and heat shock by preventing the aggregation of stress-denatured proteins, in association with DnaK and GrpE. It is the nucleotide exchange factor for DnaK and may function as a thermosensor. Unfolded proteins bind initially to DnaJ; upon interaction with the DnaJ-bound protein, DnaK hydrolyzes its bound ATP, resulting in the formation of a stable complex. GrpE releases ADP from DnaK; ATP binding to DnaK triggers the release of the substrate protein, thus completing the reaction cycle. Several rounds of ATP-dependent interactions between DnaJ, DnaK and GrpE are required for fully efficient folding. This chain is Protein GrpE, found in Colwellia psychrerythraea (strain 34H / ATCC BAA-681) (Vibrio psychroerythus).